The chain runs to 390 residues: Carbamoyl phosphate synthase small chain (390 aa).

Positions 1–198 (MTSTPTPTPT…LGEGYAVGPE (198 aa)) are CPSase. Residues Ser53, Gly250, and Gly252 each coordinate L-glutamine. Residues 202-390 (RVVVLDYGVK…VGELKGRVEA (189 aa)) enclose the Glutamine amidotransferase type-1 domain. Cys279 serves as the catalytic Nucleophile. The L-glutamine site is built by Leu280, Gln283, Asn321, Gly323, and Phe324. Residues His363 and Glu365 contribute to the active site.

It belongs to the CarA family. Composed of two chains; the small (or glutamine) chain promotes the hydrolysis of glutamine to ammonia, which is used by the large (or ammonia) chain to synthesize carbamoyl phosphate. Tetramer of heterodimers (alpha,beta)4.

It catalyses the reaction hydrogencarbonate + L-glutamine + 2 ATP + H2O = carbamoyl phosphate + L-glutamate + 2 ADP + phosphate + 2 H(+). It carries out the reaction L-glutamine + H2O = L-glutamate + NH4(+). Its pathway is amino-acid biosynthesis; L-arginine biosynthesis; carbamoyl phosphate from bicarbonate: step 1/1. It participates in pyrimidine metabolism; UMP biosynthesis via de novo pathway; (S)-dihydroorotate from bicarbonate: step 1/3. Its function is as follows. Small subunit of the glutamine-dependent carbamoyl phosphate synthetase (CPSase). CPSase catalyzes the formation of carbamoyl phosphate from the ammonia moiety of glutamine, carbonate, and phosphate donated by ATP, constituting the first step of 2 biosynthetic pathways, one leading to arginine and/or urea and the other to pyrimidine nucleotides. The small subunit (glutamine amidotransferase) binds and cleaves glutamine to supply the large subunit with the substrate ammonia. The protein is Carbamoyl phosphate synthase small chain of Maricaulis maris (strain MCS10) (Caulobacter maris).